The sequence spans 101 residues: Doublesex- and mab-3-related transcription factor 1 (101 aa).

Residues 1-13 constitute a DNA-binding region (DM); the sequence is SLIAERQRVMAAQ. Positions 52 to 75 are enriched in low complexity; the sequence is CLLLESSSPTHSTSTVTTVSTSPS. Positions 52-79 are disordered; sequence CLLLESSSPTHSTSTVTTVSTSPSEGRM.

The protein belongs to the DMRT family.

It is found in the nucleus. May be required for testis development. This Alligator mississippiensis (American alligator) protein is Doublesex- and mab-3-related transcription factor 1 (DMRT1).